Here is a 387-residue protein sequence, read N- to C-terminus: Low specificity L-threonine aldolase (387 aa).

K213 carries the N6-(pyridoxal phosphate)lysine modification. A Glycyl lysine isopeptide (Lys-Gly) (interchain with G-Cter in ubiquitin) cross-link involves residue K228. S367 and S369 each carry phosphoserine. T370 is modified (phosphothreonine).

It belongs to the threonine aldolase family. In terms of assembly, homotetramer. Requires pyridoxal 5'-phosphate as cofactor.

The catalysed reaction is L-threonine = acetaldehyde + glycine. The enzyme catalyses L-allo-threonine = acetaldehyde + glycine. It participates in amino-acid biosynthesis; glycine biosynthesis; glycine from L-allo-threonine: step 1/1. The protein operates within amino-acid degradation; L-threonine degradation via aldolase pathway; acetaldehyde and glycine from L-threonine: step 1/1. In terms of biological role, catalyzes the cleavage of L-allo-threonine and L-threonine to glycine and acetaldehyde. In Saccharomyces cerevisiae (strain ATCC 204508 / S288c) (Baker's yeast), this protein is Low specificity L-threonine aldolase (GLY1).